The primary structure comprises 133 residues: Ribosomal RNA large subunit methyltransferase H 1 (133 aa).

Residues isoleucine 55, glycine 89, and isoleucine 101–methionine 106 contribute to the S-adenosyl-L-methionine site.

The protein belongs to the RNA methyltransferase RlmH family. Homodimer.

The protein localises to the cytoplasm. It carries out the reaction pseudouridine(1915) in 23S rRNA + S-adenosyl-L-methionine = N(3)-methylpseudouridine(1915) in 23S rRNA + S-adenosyl-L-homocysteine + H(+). Functionally, specifically methylates the pseudouridine at position 1915 (m3Psi1915) in 23S rRNA. The protein is Ribosomal RNA large subunit methyltransferase H 1 of Thermoanaerobacter sp. (strain X514).